Consider the following 73-residue polypeptide: Large ribosomal subunit protein bL31 (73 aa).

The Zn(2+) site is built by cysteine 16, cysteine 18, cysteine 38, and cysteine 41.

This sequence belongs to the bacterial ribosomal protein bL31 family. Type A subfamily. Part of the 50S ribosomal subunit. Zn(2+) serves as cofactor.

Binds the 23S rRNA. The sequence is that of Large ribosomal subunit protein bL31 from Vibrio vulnificus (strain CMCP6).